The sequence spans 284 residues: Release factor glutamine methyltransferase (284 aa).

Residues 121–125 (GTGTG), D144, W172, and N188 each bind S-adenosyl-L-methionine. 188–191 (NPPY) serves as a coordination point for substrate.

This sequence belongs to the protein N5-glutamine methyltransferase family. PrmC subfamily.

The catalysed reaction is L-glutaminyl-[peptide chain release factor] + S-adenosyl-L-methionine = N(5)-methyl-L-glutaminyl-[peptide chain release factor] + S-adenosyl-L-homocysteine + H(+). Methylates the class 1 translation termination release factors RF1/PrfA and RF2/PrfB on the glutamine residue of the universally conserved GGQ motif. The polypeptide is Release factor glutamine methyltransferase (Aliivibrio fischeri (strain ATCC 700601 / ES114) (Vibrio fischeri)).